A 499-amino-acid polypeptide reads, in one-letter code: Glucose-6-phosphate isomerase (499 aa).

Glu-352 acts as the Proton donor in catalysis. Catalysis depends on residues His-383 and Lys-487.

It belongs to the GPI family.

Its subcellular location is the cytoplasm. It catalyses the reaction alpha-D-glucose 6-phosphate = beta-D-fructose 6-phosphate. The protein operates within carbohydrate biosynthesis; gluconeogenesis. It functions in the pathway carbohydrate degradation; glycolysis; D-glyceraldehyde 3-phosphate and glycerone phosphate from D-glucose: step 2/4. Catalyzes the reversible isomerization of glucose-6-phosphate to fructose-6-phosphate. In Legionella pneumophila (strain Paris), this protein is Glucose-6-phosphate isomerase.